The following is a 193-amino-acid chain: Bifunctional protein PyrR (193 aa).

Substrate-binding positions include 57 to 58 (TR), R98, 119 to 127 (DDVLYSGRS), R152, and V176. Positions 115–127 (VILVDDVLYSGRS) match the PRPP-binding motif.

This sequence belongs to the purine/pyrimidine phosphoribosyltransferase family. PyrR subfamily.

The enzyme catalyses UMP + diphosphate = 5-phospho-alpha-D-ribose 1-diphosphate + uracil. Regulates the transcription of the pyrimidine nucleotide (pyr) operon in response to exogenous pyrimidines. Functionally, also displays a weak uracil phosphoribosyltransferase activity which is not physiologically significant. This is Bifunctional protein PyrR from Mycobacterium bovis (strain ATCC BAA-935 / AF2122/97).